The primary structure comprises 273 residues: 2,3,4,5-tetrahydropyridine-2,6-dicarboxylate N-succinyltransferase (273 aa).

The protein belongs to the transferase hexapeptide repeat family.

The protein resides in the cytoplasm. The enzyme catalyses (S)-2,3,4,5-tetrahydrodipicolinate + succinyl-CoA + H2O = (S)-2-succinylamino-6-oxoheptanedioate + CoA. Its pathway is amino-acid biosynthesis; L-lysine biosynthesis via DAP pathway; LL-2,6-diaminopimelate from (S)-tetrahydrodipicolinate (succinylase route): step 1/3. The polypeptide is 2,3,4,5-tetrahydropyridine-2,6-dicarboxylate N-succinyltransferase (Acinetobacter baumannii (strain AB307-0294)).